A 236-amino-acid polypeptide reads, in one-letter code: tRNA (guanine-N(7)-)-methyltransferase (236 aa).

Residues glutamate 68, glutamate 93, aspartate 120, and aspartate 143 each contribute to the S-adenosyl-L-methionine site. The active site involves aspartate 143. Residues lysine 147, aspartate 179, and 212 to 215 (TKFE) contribute to the substrate site.

This sequence belongs to the class I-like SAM-binding methyltransferase superfamily. TrmB family.

The catalysed reaction is guanosine(46) in tRNA + S-adenosyl-L-methionine = N(7)-methylguanosine(46) in tRNA + S-adenosyl-L-homocysteine. It participates in tRNA modification; N(7)-methylguanine-tRNA biosynthesis. Functionally, catalyzes the formation of N(7)-methylguanine at position 46 (m7G46) in tRNA. In Nitrosococcus oceani (strain ATCC 19707 / BCRC 17464 / JCM 30415 / NCIMB 11848 / C-107), this protein is tRNA (guanine-N(7)-)-methyltransferase.